A 354-amino-acid chain; its full sequence is UDP-3-O-acylglucosamine N-acyltransferase (354 aa).

His257 (proton acceptor) is an active-site residue. The interval 335–354 (AQQVSKSKLRGRNPGGKQND) is disordered.

The protein belongs to the transferase hexapeptide repeat family. LpxD subfamily. In terms of assembly, homotrimer.

It catalyses the reaction a UDP-3-O-[(3R)-3-hydroxyacyl]-alpha-D-glucosamine + a (3R)-hydroxyacyl-[ACP] = a UDP-2-N,3-O-bis[(3R)-3-hydroxyacyl]-alpha-D-glucosamine + holo-[ACP] + H(+). The protein operates within bacterial outer membrane biogenesis; LPS lipid A biosynthesis. Functionally, catalyzes the N-acylation of UDP-3-O-acylglucosamine using 3-hydroxyacyl-ACP as the acyl donor. Is involved in the biosynthesis of lipid A, a phosphorylated glycolipid that anchors the lipopolysaccharide to the outer membrane of the cell. This Rhizobium etli (strain ATCC 51251 / DSM 11541 / JCM 21823 / NBRC 15573 / CFN 42) protein is UDP-3-O-acylglucosamine N-acyltransferase.